An 868-amino-acid polypeptide reads, in one-letter code: Monofunctional pimaradiene synthase (868 aa).

The Mg(2+) site is built by Asp-620, Asp-624, Asn-764, Thr-768, and Glu-772.

This sequence belongs to the terpene synthase family. Tpsd subfamily. Mg(2+) is required as a cofactor.

The enzyme catalyses (+)-copalyl diphosphate = (-)-pimara-8(14),15-diene + diphosphate. Its pathway is terpene metabolism; oleoresin biosynthesis. Its function is as follows. Involved in defensive oleoresin formation in conifers in response to insect attack or other injury. Involved in diterpene (C20) olefins biosynthesis. Monofunctional enzyme lacking the DXDD motif in the class II active site relevant for the cyclization of geranylgeranyl diphosphate (GGPP). Requires (+)-copalyl diphosphate ((+)-CPP) as substrate, but no activity with GGPP or ent-CPP. Pimaradiene is the major products of the enzyme. This is Monofunctional pimaradiene synthase from Pinus banksiana (Jack pine).